The sequence spans 256 residues: Probable sulfite/organosulfonate exporter TauE (256 aa).

The next 8 helical transmembrane spans lie at 5–25, 33–53, 76–96, 103–123, 142–162, 172–190, 199–219, and 236–256; these read LLLPLLGLQALLGAGTYFQTV, IVMGVTSGLGLAPVATVAAVV, AVAAAAIGILPSVVVGVLVLE, ATLLQLLLGAVILYGGLSAAL, VFGGLLSGMFGVSGPPLIFQF, IRCALILVFTVTSTVRTLF, AAVCVQAAIAVPVVVIATLLG, and FGVLIGIGASLMLPAISAWVL.

The protein belongs to the 4-toluene sulfonate uptake permease (TSUP) (TC 2.A.102) family.

The protein resides in the cell inner membrane. In terms of biological role, could be a sulfite/organosulfonate exporter with a wide substrate range, including 3-sulfolactate and 3-sulfopyruvate. The protein is Probable sulfite/organosulfonate exporter TauE of Cupriavidus necator (strain ATCC 17699 / DSM 428 / KCTC 22496 / NCIMB 10442 / H16 / Stanier 337) (Ralstonia eutropha).